Here is a 251-residue protein sequence, read N- to C-terminus: Malonyl-[acyl-carrier protein] O-methyltransferase (251 aa).

Belongs to the methyltransferase superfamily.

The enzyme catalyses malonyl-[ACP] + S-adenosyl-L-methionine = malonyl-[ACP] methyl ester + S-adenosyl-L-homocysteine. Its pathway is cofactor biosynthesis; biotin biosynthesis. Its function is as follows. Converts the free carboxyl group of a malonyl-thioester to its methyl ester by transfer of a methyl group from S-adenosyl-L-methionine (SAM). It allows to synthesize pimeloyl-ACP via the fatty acid synthetic pathway. This is Malonyl-[acyl-carrier protein] O-methyltransferase from Enterobacter lignolyticus (strain SCF1).